We begin with the raw amino-acid sequence, 387 residues long: uncharacterized protein (387 aa).

This is an uncharacterized protein from Escherichia coli (strain K12).